The primary structure comprises 300 residues: Bifunctional protein FolD 2 (300 aa).

Residues 165 to 167 (GRS), Ser190, and Ile231 each bind NADP(+).

The protein belongs to the tetrahydrofolate dehydrogenase/cyclohydrolase family. In terms of assembly, homodimer.

The catalysed reaction is (6R)-5,10-methylene-5,6,7,8-tetrahydrofolate + NADP(+) = (6R)-5,10-methenyltetrahydrofolate + NADPH. The enzyme catalyses (6R)-5,10-methenyltetrahydrofolate + H2O = (6R)-10-formyltetrahydrofolate + H(+). Its pathway is one-carbon metabolism; tetrahydrofolate interconversion. In terms of biological role, catalyzes the oxidation of 5,10-methylenetetrahydrofolate to 5,10-methenyltetrahydrofolate and then the hydrolysis of 5,10-methenyltetrahydrofolate to 10-formyltetrahydrofolate. The sequence is that of Bifunctional protein FolD 2 from Pseudomonas syringae pv. syringae (strain B728a).